The sequence spans 357 residues: UDP-N-acetylglucosamine--N-acetylmuramyl-(pentapeptide) pyrophosphoryl-undecaprenol N-acetylglucosamine transferase (357 aa).

UDP-N-acetyl-alpha-D-glucosamine is bound by residues Arg166, Ser196, and Gln290.

Belongs to the glycosyltransferase 28 family. MurG subfamily.

The protein localises to the cell membrane. The enzyme catalyses Mur2Ac(oyl-L-Ala-gamma-D-Glu-L-Lys-D-Ala-D-Ala)-di-trans,octa-cis-undecaprenyl diphosphate + UDP-N-acetyl-alpha-D-glucosamine = beta-D-GlcNAc-(1-&gt;4)-Mur2Ac(oyl-L-Ala-gamma-D-Glu-L-Lys-D-Ala-D-Ala)-di-trans,octa-cis-undecaprenyl diphosphate + UDP + H(+). It participates in cell wall biogenesis; peptidoglycan biosynthesis. In terms of biological role, cell wall formation. Catalyzes the transfer of a GlcNAc subunit on undecaprenyl-pyrophosphoryl-MurNAc-pentapeptide (lipid intermediate I) to form undecaprenyl-pyrophosphoryl-MurNAc-(pentapeptide)GlcNAc (lipid intermediate II). The sequence is that of UDP-N-acetylglucosamine--N-acetylmuramyl-(pentapeptide) pyrophosphoryl-undecaprenol N-acetylglucosamine transferase from Staphylococcus epidermidis (strain ATCC 35984 / DSM 28319 / BCRC 17069 / CCUG 31568 / BM 3577 / RP62A).